The chain runs to 396 residues: NADH-quinone oxidoreductase subunit D (396 aa).

It belongs to the complex I 49 kDa subunit family. As to quaternary structure, NDH-1 is composed of 14 different subunits. Subunits NuoB, C, D, E, F, and G constitute the peripheral sector of the complex.

The protein localises to the cell inner membrane. It carries out the reaction a quinone + NADH + 5 H(+)(in) = a quinol + NAD(+) + 4 H(+)(out). In terms of biological role, NDH-1 shuttles electrons from NADH, via FMN and iron-sulfur (Fe-S) centers, to quinones in the respiratory chain. The immediate electron acceptor for the enzyme in this species is believed to be ubiquinone. Couples the redox reaction to proton translocation (for every two electrons transferred, four hydrogen ions are translocated across the cytoplasmic membrane), and thus conserves the redox energy in a proton gradient. The protein is NADH-quinone oxidoreductase subunit D of Orientia tsutsugamushi (strain Ikeda) (Rickettsia tsutsugamushi).